Consider the following 175-residue polypeptide: RNA pyrophosphohydrolase (175 aa).

One can recognise a Nudix hydrolase domain in the interval G6–K149. Positions G38 to G59 match the Nudix box motif.

This sequence belongs to the Nudix hydrolase family. RppH subfamily. It depends on a divalent metal cation as a cofactor.

Its function is as follows. Accelerates the degradation of transcripts by removing pyrophosphate from the 5'-end of triphosphorylated RNA, leading to a more labile monophosphorylated state that can stimulate subsequent ribonuclease cleavage. The chain is RNA pyrophosphohydrolase from Yersinia enterocolitica serotype O:8 / biotype 1B (strain NCTC 13174 / 8081).